The sequence spans 279 residues: Methylthioribulose-1-phosphate dehydratase (279 aa).

Residue Cys132 participates in substrate binding. Zn(2+) is bound by residues His150 and His152. Glu175 (proton donor/acceptor) is an active-site residue. His240 is a Zn(2+) binding site.

This sequence belongs to the aldolase class II family. MtnB subfamily. Requires Zn(2+) as cofactor.

The protein resides in the cytoplasm. It carries out the reaction 5-(methylsulfanyl)-D-ribulose 1-phosphate = 5-methylsulfanyl-2,3-dioxopentyl phosphate + H2O. The protein operates within amino-acid biosynthesis; L-methionine biosynthesis via salvage pathway; L-methionine from S-methyl-5-thio-alpha-D-ribose 1-phosphate: step 2/6. Catalyzes the dehydration of methylthioribulose-1-phosphate (MTRu-1-P) into 2,3-diketo-5-methylthiopentyl-1-phosphate (DK-MTP-1-P). The sequence is that of Methylthioribulose-1-phosphate dehydratase from Candida tropicalis (strain ATCC MYA-3404 / T1) (Yeast).